A 381-amino-acid chain; its full sequence is Cytochrome b (381 aa).

4 helical membrane passes run 31–51 (FGFL…FLAM), 75–97 (WLLR…IHIF), 112–132 (VWVI…IGYV), and 178–198 (FFSL…VHLA). His-81 and His-95 together coordinate heme b. 2 residues coordinate heme b: His-182 and His-196. His-201 contributes to the a ubiquinone binding site. The next 4 helical transmembrane spans lie at 224–244 (FIVK…IFVY), 288–308 (LGGV…PWIH), 320–340 (LYRL…WIGG), and 347–367 (YVII…ILLP).

The protein belongs to the cytochrome b family. The main subunits of complex b-c1 are: cytochrome b, cytochrome c1 and the Rieske protein. It depends on heme b as a cofactor.

It is found in the mitochondrion inner membrane. Functionally, component of the ubiquinol-cytochrome c reductase complex (complex III or cytochrome b-c1 complex) that is part of the mitochondrial respiratory chain. The b-c1 complex mediates electron transfer from ubiquinol to cytochrome c. Contributes to the generation of a proton gradient across the mitochondrial membrane that is then used for ATP synthesis. This is Cytochrome b (MT-CYB) from Chondrus crispus (Carrageen Irish moss).